A 438-amino-acid chain; its full sequence is MFDLPTVAPIDMEDSWVTFQAEGEQGQDSFSSSVNLDDSLTSLQWLQEFSILNANVGKAPSSGDSHGYKHLFGAPCSPLAADPACLGMPHTPGKPISSSTSRASHLGLQPMEDIDYKTNPHVKPPYSYATLICMAMQASKKTKITLSAIYKWITDNFCYFRHADPTWQNSIRHNLSLNKCFIKVPREKDEPGKGGFWKIDPQYADRLMNGAMKKRRLPPVQIHPAFASAQAAASGNSNRGSPWQLSVNSESHQLLKEFEEATGEQGWNALGEHGWNAISDGKSHKRKQPLPKRMFKAPRLSSSPMLCQEEQTELGSLKGDFDWEVIFDSSMNGVNFSAFEDLEVTPPLSPVTRSVDLTVHGKHIDCPQQWYPLGQDQAVVQNSLDFDETFLATSFLQHPWEENRNDYLSNSANIEQLFDLNEEFPAELNDWSALGSYI.

The segment at residues 123-217 is a DNA-binding region (fork-head); that stretch reads KPPYSYATLI…MNGAMKKRRL (95 aa).

It belongs to the FOXJ1 family.

Its subcellular location is the nucleus. In terms of biological role, key transcription factor required for motile ciliogenesis. Activates genes essential for motile cilia formation and function. This chain is Forkhead box protein J1, found in Xenopus tropicalis (Western clawed frog).